Consider the following 1272-residue polypeptide: Magnesium-chelatase subunit H (1272 aa).

It belongs to the Mg-chelatase subunit H family.

It catalyses the reaction protoporphyrin IX + Mg(2+) + ATP + H2O = Mg-protoporphyrin IX + ADP + phosphate + 3 H(+). It functions in the pathway porphyrin-containing compound metabolism; bacteriochlorophyll biosynthesis (light-independent). Functionally, involved in bacteriochlorophyll pigment biosynthesis; introduces a magnesium ion into protoporphyrin IX to yield Mg-protoroporphyrin IX. The protein is Magnesium-chelatase subunit H (bchH) of Chlorobaculum parvum (strain DSM 263 / NCIMB 8327) (Chlorobium vibrioforme subsp. thiosulfatophilum).